Reading from the N-terminus, the 385-residue chain is tRNA-specific 2-thiouridylase MnmA (385 aa).

Residues 12-19 and methionine 38 each bind ATP; that span reads GLSGGVDS. Residues 108-110 are interaction with target base in tRNA; that stretch reads NPD. Cysteine 113 (nucleophile) is an active-site residue. Cysteine 113 and cysteine 210 are disulfide-bonded. Position 138 (glycine 138) interacts with ATP. The segment at 160-162 is interaction with tRNA; sequence KDQ. Residue cysteine 210 is the Cysteine persulfide intermediate of the active site.

It belongs to the MnmA/TRMU family.

It localises to the cytoplasm. The enzyme catalyses S-sulfanyl-L-cysteinyl-[protein] + uridine(34) in tRNA + AH2 + ATP = 2-thiouridine(34) in tRNA + L-cysteinyl-[protein] + A + AMP + diphosphate + H(+). Catalyzes the 2-thiolation of uridine at the wobble position (U34) of tRNA, leading to the formation of s(2)U34. In Ureaplasma parvum serovar 3 (strain ATCC 27815 / 27 / NCTC 11736), this protein is tRNA-specific 2-thiouridylase MnmA.